The primary structure comprises 155 residues: Protein FAM162A (155 aa).

The interval 77–103 (RFKKEEEIPETISFEMLDAAKNKLRVK) is required for proapoptotic activity. A helical membrane pass occupies residues 104–121 (VSYLMIALTVAGCIYMVI).

Belongs to the UPF0389 family. Interacts with HSP90AB1; HSP90AB1 is essential for FAM162A mitochondrial localization and pro-apoptotic activity. Interacts with VDAC2; the interaction is probably involved in inducing mitochondrial permeability transition.

It is found in the mitochondrion membrane. Functionally, proposed to be involved in regulation of apoptosis; the exact mechanism may differ between cell types/tissues. May be involved in hypoxia-induced cell death of transformed cells implicating cytochrome C release and caspase activation (such as CASP9) and inducing mitochondrial permeability transition. May be involved in hypoxia-induced cell death of neuronal cells probably by promoting release of AIFM1 from mitochondria to cytoplasm and its translocation to the nucleus; however, the involvement of caspases has been reported conflictingly. This chain is Protein FAM162A (Fam162a), found in Mus musculus (Mouse).